Reading from the N-terminus, the 332-residue chain is Holliday junction branch migration complex subunit RuvB (332 aa).

Positions 1–181 are large ATPase domain (RuvB-L); the sequence is MSRILDNEMM…FGITGHMEYY (181 aa). Residues leucine 20, arginine 21, glycine 62, lysine 65, threonine 66, threonine 67, 128-130, arginine 171, tyrosine 181, and arginine 218 contribute to the ATP site; that span reads EDF. Threonine 66 is a binding site for Mg(2+). The interval 182–252 is small ATPAse domain (RuvB-S); the sequence is AHADLTEIVE…ITDKALTMLD (71 aa). A head domain (RuvB-H) region spans residues 255-332; it reads HEGLDYVDQK…EHLGYEYSEK (78 aa). Residues arginine 291, arginine 310, arginine 312, and arginine 315 each contribute to the DNA site.

This sequence belongs to the RuvB family. Homohexamer. Forms an RuvA(8)-RuvB(12)-Holliday junction (HJ) complex. HJ DNA is sandwiched between 2 RuvA tetramers; dsDNA enters through RuvA and exits via RuvB. An RuvB hexamer assembles on each DNA strand where it exits the tetramer. Each RuvB hexamer is contacted by two RuvA subunits (via domain III) on 2 adjacent RuvB subunits; this complex drives branch migration. In the full resolvosome a probable DNA-RuvA(4)-RuvB(12)-RuvC(2) complex forms which resolves the HJ.

The protein resides in the cytoplasm. The enzyme catalyses ATP + H2O = ADP + phosphate + H(+). Its function is as follows. The RuvA-RuvB-RuvC complex processes Holliday junction (HJ) DNA during genetic recombination and DNA repair, while the RuvA-RuvB complex plays an important role in the rescue of blocked DNA replication forks via replication fork reversal (RFR). RuvA specifically binds to HJ cruciform DNA, conferring on it an open structure. The RuvB hexamer acts as an ATP-dependent pump, pulling dsDNA into and through the RuvAB complex. RuvB forms 2 homohexamers on either side of HJ DNA bound by 1 or 2 RuvA tetramers; 4 subunits per hexamer contact DNA at a time. Coordinated motions by a converter formed by DNA-disengaged RuvB subunits stimulates ATP hydrolysis and nucleotide exchange. Immobilization of the converter enables RuvB to convert the ATP-contained energy into a lever motion, pulling 2 nucleotides of DNA out of the RuvA tetramer per ATP hydrolyzed, thus driving DNA branch migration. The RuvB motors rotate together with the DNA substrate, which together with the progressing nucleotide cycle form the mechanistic basis for DNA recombination by continuous HJ branch migration. Branch migration allows RuvC to scan DNA until it finds its consensus sequence, where it cleaves and resolves cruciform DNA. The protein is Holliday junction branch migration complex subunit RuvB of Streptococcus pneumoniae serotype 4 (strain ATCC BAA-334 / TIGR4).